The chain runs to 555 residues: Formate--tetrahydrofolate ligase (555 aa).

ATP is bound at residue 65–72 (TPAGEGKS).

It belongs to the formate--tetrahydrofolate ligase family.

The catalysed reaction is (6S)-5,6,7,8-tetrahydrofolate + formate + ATP = (6R)-10-formyltetrahydrofolate + ADP + phosphate. Its pathway is one-carbon metabolism; tetrahydrofolate interconversion. The protein is Formate--tetrahydrofolate ligase of Staphylococcus aureus (strain COL).